The chain runs to 501 residues: Aerobic glycerol-3-phosphate dehydrogenase (501 aa).

Residue 5 to 33 (DLIVIGGGINGAGIAADAAGRGLSVLMLE) coordinates FAD.

It belongs to the FAD-dependent glycerol-3-phosphate dehydrogenase family. FAD is required as a cofactor.

It localises to the cytoplasm. It carries out the reaction a quinone + sn-glycerol 3-phosphate = dihydroxyacetone phosphate + a quinol. It functions in the pathway polyol metabolism; glycerol degradation via glycerol kinase pathway; glycerone phosphate from sn-glycerol 3-phosphate (aerobic route): step 1/1. In terms of biological role, conversion of glycerol 3-phosphate to dihydroxyacetone. Uses molecular oxygen or nitrate as electron acceptor. This is Aerobic glycerol-3-phosphate dehydrogenase (glpD) from Escherichia coli (strain K12).